A 132-amino-acid polypeptide reads, in one-letter code: Large ribosomal subunit protein bL17 (132 aa).

Belongs to the bacterial ribosomal protein bL17 family. As to quaternary structure, part of the 50S ribosomal subunit. Contacts protein L32.

The polypeptide is Large ribosomal subunit protein bL17 (Variovorax paradoxus (strain S110)).